Reading from the N-terminus, the 367-residue chain is MTPEQLPIEHYEDQLAEKVTRLTTMMSAFNAPEVEVFRSAVSHYRMRAEFRIWHEGDDLYHIIFDQQTRERIRVDSFPAASELINRLMPRLIEKIRDQRLLRFKLFQVDYLSTVSGQIVVSMLYHRKLDEEWQQAAAALRDSLRAEGFDLHLIGRATKTKICLDQDYVDERLTVDGREMVYRQVENSFTQPNAAVNVKMLEWALDSTRHSAGDLLELYCGNGNFSLALARNFNRVLATEIAKPSVASAQYNIAVNQIDNVQIIRMAAEEFTQAMNGERSFRRLEGIDLTRYQCETIFVDPPRSGLDDETVKMVQAYPRILYISCNPQTLCENLTALSTTHDVTRLALFDQFPYTHHMECGVLLTRRH.

Residues Gln190, Tyr218, Asn223, Glu239, and Asp299 each contribute to the S-adenosyl-L-methionine site. Cys324 functions as the Nucleophile in the catalytic mechanism. Glu358 (proton acceptor) is an active-site residue.

Belongs to the class I-like SAM-binding methyltransferase superfamily. RNA M5U methyltransferase family. TrmA subfamily.

It carries out the reaction uridine(54) in tRNA + S-adenosyl-L-methionine = 5-methyluridine(54) in tRNA + S-adenosyl-L-homocysteine + H(+). The enzyme catalyses uridine(341) in tmRNA + S-adenosyl-L-methionine = 5-methyluridine(341) in tmRNA + S-adenosyl-L-homocysteine + H(+). In terms of biological role, dual-specificity methyltransferase that catalyzes the formation of 5-methyluridine at position 54 (m5U54) in all tRNAs, and that of position 341 (m5U341) in tmRNA (transfer-mRNA). The chain is tRNA/tmRNA (uracil-C(5))-methyltransferase from Erwinia tasmaniensis (strain DSM 17950 / CFBP 7177 / CIP 109463 / NCPPB 4357 / Et1/99).